The primary structure comprises 228 residues: Calcyclin-binding protein (228 aa).

An N-acetylalanine modification is found at Ala2. The tract at residues 2-80 (ASEELQKDLE…YTVKISNYGW (79 aa)) is interaction with SIAH1. Ser3 carries the phosphoserine modification. Lys8 and Lys19 each carry N6-acetyllysine. The residue at position 34 (Ser34) is a Phosphoserine. The CS domain occupies 73-167 (VKISNYGWDQ…VENTRWDYLT (95 aa)). Residues 73–228 (VKISNYGWDQ…EKQAKGDTEF (156 aa)) are interaction with SKP1. N6-acetyllysine occurs at positions 85 and 118. Residues 154 to 228 (CRKKVENTRW…EKQAKGDTEF (75 aa)) form an interaction with S100A6 region. The 61-residue stretch at 168–228 (QVEKECKEKE…EKQAKGDTEF (61 aa)) folds into the SGS domain.

As to quaternary structure, component of some large E3 complex at least composed of UBE2D1, SIAH1, CACYBP/SIP, SKP1, APC and TBL1X. Interacts directly with SIAH1, SIAH2 and SKP1. Interacts with protein of the S100 family S100A1, S100A6, S100B, S100P and S100A12 in a calcium-dependent manner. Phosphorylated on serine residues. Phosphorylated upon induction by RA or at high calcium concentrations.

The protein resides in the nucleus. It localises to the cytoplasm. May be involved in calcium-dependent ubiquitination and subsequent proteasomal degradation of target proteins. Probably serves as a molecular bridge in ubiquitin E3 complexes. Participates in the ubiquitin-mediated degradation of beta-catenin (CTNNB1). The protein is Calcyclin-binding protein (CACYBP) of Macaca fascicularis (Crab-eating macaque).